Here is a 288-residue protein sequence, read N- to C-terminus: Bifunctional protein FolD (288 aa).

Residues 166 to 168 (GAS) and Ile232 contribute to the NADP(+) site.

This sequence belongs to the tetrahydrofolate dehydrogenase/cyclohydrolase family. In terms of assembly, homodimer.

The enzyme catalyses (6R)-5,10-methylene-5,6,7,8-tetrahydrofolate + NADP(+) = (6R)-5,10-methenyltetrahydrofolate + NADPH. The catalysed reaction is (6R)-5,10-methenyltetrahydrofolate + H2O = (6R)-10-formyltetrahydrofolate + H(+). The protein operates within one-carbon metabolism; tetrahydrofolate interconversion. Its function is as follows. Catalyzes the oxidation of 5,10-methylenetetrahydrofolate to 5,10-methenyltetrahydrofolate and then the hydrolysis of 5,10-methenyltetrahydrofolate to 10-formyltetrahydrofolate. This Escherichia fergusonii (strain ATCC 35469 / DSM 13698 / CCUG 18766 / IAM 14443 / JCM 21226 / LMG 7866 / NBRC 102419 / NCTC 12128 / CDC 0568-73) protein is Bifunctional protein FolD.